We begin with the raw amino-acid sequence, 154 residues long: Methylglyoxal synthase (154 aa).

The region spanning 6–154 is the MGS-like domain; that stretch reads GALPSRKQIA…AYIAERTKKL (149 aa). Residues His-19, Lys-23, 45–48, and 65–66 each bind substrate; these read TGTT and SG. Asp-71 acts as the Proton donor/acceptor in catalysis. His-98 is a binding site for substrate.

It belongs to the methylglyoxal synthase family.

The catalysed reaction is dihydroxyacetone phosphate = methylglyoxal + phosphate. In terms of biological role, catalyzes the formation of methylglyoxal from dihydroxyacetone phosphate. This is Methylglyoxal synthase from Saccharophagus degradans (strain 2-40 / ATCC 43961 / DSM 17024).